The sequence spans 547 residues: Inositol-tetrakisphosphate 1-kinase 6 (547 aa).

Lys-263 is a 1D-myo-inositol 1,3,4-trisphosphate binding site. 2 residues coordinate ATP: Arg-317 and Lys-370. The ATP-grasp domain occupies Leu-327–Glu-539. Positions 381 and 415 each coordinate 1D-myo-inositol 1,3,4-trisphosphate. Residues Gln-404–Lys-415, Ser-430, and Ser-450 contribute to the ATP site. 3 residues coordinate Mg(2+): Asp-497, Asp-511, and Asn-513. 2 residues coordinate 1D-myo-inositol 1,3,4-trisphosphate: Asn-513 and Ser-517.

This sequence belongs to the ITPK1 family. Monomer. The cofactor is Mg(2+).

It carries out the reaction 1D-myo-inositol 3,4,5,6-tetrakisphosphate + ATP = 1D-myo-inositol 1,3,4,5,6-pentakisphosphate + ADP + H(+). The enzyme catalyses 1D-myo-inositol 1,3,4-trisphosphate + ATP = 1D-myo-inositol 1,3,4,5-tetrakisphosphate + ADP + H(+). It catalyses the reaction 1D-myo-inositol 1,3,4-trisphosphate + ATP = 1D-myo-inositol 1,3,4,6-tetrakisphosphate + ADP + H(+). Its function is as follows. Kinase that can phosphorylate various inositol polyphosphate such as Ins(3,4,5,6)P4 or Ins(1,3,4)P3 and participates in phytic acid biosynthesis in developing seeds. Phytic acid is the primary storage form of phosphorus in cereal grains and other plant seeds. The polypeptide is Inositol-tetrakisphosphate 1-kinase 6 (Oryza sativa subsp. indica (Rice)).